A 272-amino-acid chain; its full sequence is Dermonecrotic toxin LspaSicTox-alphaII1 (272 aa).

The active site involves His5. Residues Glu25 and Asp27 each contribute to the Mg(2+) site. Residue His41 is the Nucleophile of the active site. Disulfide bonds link Cys45–Cys51 and Cys47–Cys190. Residue Asp85 coordinates Mg(2+).

The protein belongs to the arthropod phospholipase D family. Class II subfamily. Requires Mg(2+) as cofactor. As to expression, expressed by the venom gland.

The protein resides in the secreted. The enzyme catalyses an N-(acyl)-sphingosylphosphocholine = an N-(acyl)-sphingosyl-1,3-cyclic phosphate + choline. It catalyses the reaction an N-(acyl)-sphingosylphosphoethanolamine = an N-(acyl)-sphingosyl-1,3-cyclic phosphate + ethanolamine. The catalysed reaction is a 1-acyl-sn-glycero-3-phosphocholine = a 1-acyl-sn-glycero-2,3-cyclic phosphate + choline. It carries out the reaction a 1-acyl-sn-glycero-3-phosphoethanolamine = a 1-acyl-sn-glycero-2,3-cyclic phosphate + ethanolamine. Dermonecrotic toxins cleave the phosphodiester linkage between the phosphate and headgroup of certain phospholipids (sphingolipid and lysolipid substrates), forming an alcohol (often choline) and a cyclic phosphate. This toxin acts on sphingomyelin (SM). It may also act on ceramide phosphoethanolamine (CPE), lysophosphatidylcholine (LPC) and lysophosphatidylethanolamine (LPE), but not on lysophosphatidylserine (LPS), and lysophosphatidylglycerol (LPG). It acts by transphosphatidylation, releasing exclusively cyclic phosphate products as second products. Induces dermonecrosis, hemolysis, increased vascular permeability, edema, inflammatory response, and platelet aggregation. In Loxosceles spadicea (Recluse spider), this protein is Dermonecrotic toxin LspaSicTox-alphaII1.